Here is a 120-residue protein sequence, read N- to C-terminus: MFLLHEYDIFWTFLIIASLIPILAFWISGILAPVSEGPEKLSSYESGIEPMGGAWLQFRIRYYMFALVFVVFDVETVFLYPWAMSFDVLGVSVFIEAFIFVLILVVGLVYAWRKGALEWS.

Transmembrane regions (helical) follow at residues 9–29, 64–84, and 88–108; these read IFWTFLIIASLIPILAFWISG, MFALVFVVFDVETVFLYPWAM, and VLGVSVFIEAFIFVLILVVGL.

The protein belongs to the complex I subunit 3 family. In terms of assembly, NDH is composed of at least 16 different subunits, 5 of which are encoded in the nucleus.

It is found in the plastid. It localises to the chloroplast thylakoid membrane. The enzyme catalyses a plastoquinone + NADH + (n+1) H(+)(in) = a plastoquinol + NAD(+) + n H(+)(out). It catalyses the reaction a plastoquinone + NADPH + (n+1) H(+)(in) = a plastoquinol + NADP(+) + n H(+)(out). Its function is as follows. NDH shuttles electrons from NAD(P)H:plastoquinone, via FMN and iron-sulfur (Fe-S) centers, to quinones in the photosynthetic chain and possibly in a chloroplast respiratory chain. The immediate electron acceptor for the enzyme in this species is believed to be plastoquinone. Couples the redox reaction to proton translocation, and thus conserves the redox energy in a proton gradient. The polypeptide is NAD(P)H-quinone oxidoreductase subunit 3, chloroplastic (Agrostis stolonifera (Creeping bentgrass)).